The primary structure comprises 448 residues: Iroquois-class homeodomain protein irx-3 (448 aa).

A DNA-binding region (homeobox; TALE-type) is located at residues 108-170 (DPSRPKNATR…NARRRLKKEN (63 aa)). Residues 171 to 247 (KMTWAPRSRT…EVSDGFEDLN (77 aa)) are disordered. Over residues 195-222 (KHEDEEEIDLENIDTEDIESKEDLDDPD) the composition is skewed to acidic residues. The span at 223–237 (TDIHSDSKTDTRSDS) shows a compositional bias: basic and acidic residues. The span at 238–247 (EVSDGFEDLN) shows a compositional bias: acidic residues.

It belongs to the TALE/IRO homeobox family. As to expression, primarily expressed in the developing central nervous system (CNS). At gastrula stage, expressed in both the superficial and deep layers of the presumptive neural plate with expression spreading to the prospective hindbrain, spinal cord and midbrain-hindbrain junction as neurulation proceeds. Not expressed in the anterior neural plate and CNS expression in the tadpole excludes the forebrain. Outside of the CNS, expressed around the closing blastopore at early gastrula stages and as gastrulation proceeds, expression switches to the anterior lateral plate mesoderm. In tadpoles, expressed in the ectodermal layer of the branchial arches, and in the otic vesicle. Also expressed in specific and overlapping dynamic patterns with irx1 and irx2 during pronephric kidney development. Renal expression begins before segment-specific terminal differentiation in the pronephric anlage at mid-neurula stage, and is later found in proximal tubule PT3 as well as intermediate tubule segments IT1 and IT2, with expression in the kidney being maintained through to the tadpole stage.

It is found in the nucleus. Its function is as follows. Acts partially redundantly with other irx members in neural patterning. Required for formation of the posterior forebrain, midbrain, hindbrain, and to a lesser extent, spinal cord. Both up-regulates and down-regulates gene expression during neural development. Acts early in neural plate development to induce proneural gene expression and specify a neural precursor state. Also up-regulates repressors that prevent neuronal differentiation. Required during at least two stages of pronephros kidney development; during neurula stages, maintains transcription of key renal genes to define the size and identity of the pronephric anlage, probably in part through regulation of bmp-signaling. Subsequently required for proper formation of the intermediate tubule segment of the pronephros. The protein is Iroquois-class homeodomain protein irx-3 (irx3) of Xenopus laevis (African clawed frog).